A 249-amino-acid chain; its full sequence is Receptor-transporting protein 4 (249 aa).

At 1 to 227 the chain is on the cytoplasmic side; that stretch reads MLFPDDFSTW…QGCREPPQRE (227 aa). The segment at 50 to 162 adopts a 3CxxC-type zinc-finger fold; the sequence is TVLGRFQCSR…DTRNCEACSL (113 aa). A disordered region spans residues 173 to 208; the sequence is KVKPPRSPSPLPKSSSPSKSCPPPPQTRNTDFGNKT. Residues 199–208 are compositionally biased toward polar residues; it reads TRNTDFGNKT. Residues 228–248 form a helical membrane-spanning segment; sequence IEPPLFLFLSIAAFALFSLFT.

Belongs to the TMEM7 family. As to quaternary structure, interacts with TASR16. Interacts with OPRD1 and OPRM1; the interaction promotes cell surface localization of the OPDR1-OPRM1 heterodimer. In terms of tissue distribution, expressed at low levels in olfactory neurons. Upon viral infection, highly expressed in brain and different cells of nervous tissue.

The protein localises to the membrane. Its subcellular location is the cytoplasm. Chaperone protein that facilitates the trafficking and functional cell surface expression of some G-protein coupled receptors (GPCRs). Promotes functional expression of the bitter taste receptor TAS2R16. Also promotes functional expression of the opioid receptor heterodimer OPRD1-OPRM1. In addition, acts as a potent IFN-inducible suppressor of pathogens including lyssavirus rabies, influenza A or yellow fever virus. Mechanistically, associates with the viral replicase, binds viral RNA, and thereby suppresses viral genome amplification that replicates at the endoplasmic reticulum. In addition, restores antiviral signaling by interacting with and sequestering influenza virus protein NS1. The sequence is that of Receptor-transporting protein 4 (Rtp4) from Mus musculus (Mouse).